We begin with the raw amino-acid sequence, 127 residues long: Large ribosomal subunit protein bL20 (127 aa).

Belongs to the bacterial ribosomal protein bL20 family.

In terms of biological role, binds directly to 23S ribosomal RNA and is necessary for the in vitro assembly process of the 50S ribosomal subunit. It is not involved in the protein synthesizing functions of that subunit. The sequence is that of Large ribosomal subunit protein bL20 (rplT) from Mycoplasma pneumoniae (strain ATCC 29342 / M129 / Subtype 1) (Mycoplasmoides pneumoniae).